The chain runs to 52 residues: uncharacterized protein (52 aa).

This is an uncharacterized protein from Homo sapiens (Human).